Consider the following 432-residue polypeptide: Tol-Pal system protein TolB (432 aa).

An N-terminal signal peptide occupies residues 1–22 (MMFKKCLSVLFTCLIFISSARA).

This sequence belongs to the TolB family. In terms of assembly, the Tol-Pal system is composed of five core proteins: the inner membrane proteins TolA, TolQ and TolR, the periplasmic protein TolB and the outer membrane protein Pal. They form a network linking the inner and outer membranes and the peptidoglycan layer.

Its subcellular location is the periplasm. In terms of biological role, part of the Tol-Pal system, which plays a role in outer membrane invagination during cell division and is important for maintaining outer membrane integrity. The polypeptide is Tol-Pal system protein TolB (Marinomonas sp. (strain MWYL1)).